The sequence spans 421 residues: Gamma-glutamyl phosphate reductase (421 aa).

The protein belongs to the gamma-glutamyl phosphate reductase family.

Its subcellular location is the cytoplasm. It carries out the reaction L-glutamate 5-semialdehyde + phosphate + NADP(+) = L-glutamyl 5-phosphate + NADPH + H(+). Its pathway is amino-acid biosynthesis; L-proline biosynthesis; L-glutamate 5-semialdehyde from L-glutamate: step 2/2. Catalyzes the NADPH-dependent reduction of L-glutamate 5-phosphate into L-glutamate 5-semialdehyde and phosphate. The product spontaneously undergoes cyclization to form 1-pyrroline-5-carboxylate. The sequence is that of Gamma-glutamyl phosphate reductase from Nitrosospira multiformis (strain ATCC 25196 / NCIMB 11849 / C 71).